The sequence spans 65 residues: MPKMKTNKSAQKRFKKTGSGRFKCKQSHLRHILTKKSTKRKRHLRAASMIHDNDVAMVRRMLPYA.

A disordered region spans residues 1 to 26 (MPKMKTNKSAQKRFKKTGSGRFKCKQ). Residues 10–26 (AQKRFKKTGSGRFKCKQ) show a composition bias toward basic residues.

This sequence belongs to the bacterial ribosomal protein bL35 family.

The sequence is that of Large ribosomal subunit protein bL35 from Hydrogenovibrio crunogenus (strain DSM 25203 / XCL-2) (Thiomicrospira crunogena).